The sequence spans 459 residues: ATP-dependent protease ATPase subunit HslU (459 aa).

ATP contacts are provided by residues Val26, 68-73 (GVGKTE), Asp271, Glu337, and Arg409.

This sequence belongs to the ClpX chaperone family. HslU subfamily. A double ring-shaped homohexamer of HslV is capped on each side by a ring-shaped HslU homohexamer. The assembly of the HslU/HslV complex is dependent on binding of ATP.

Its subcellular location is the cytoplasm. Its function is as follows. ATPase subunit of a proteasome-like degradation complex; this subunit has chaperone activity. The binding of ATP and its subsequent hydrolysis by HslU are essential for unfolding of protein substrates subsequently hydrolyzed by HslV. HslU recognizes the N-terminal part of its protein substrates and unfolds these before they are guided to HslV for hydrolysis. The sequence is that of ATP-dependent protease ATPase subunit HslU from Xylella fastidiosa (strain M23).